Reading from the N-terminus, the 36-residue chain is Beta-amanitin proprotein (36 aa).

Positions 1–10 (MSDINATRLP) are excised as a propeptide. Residues 11–18 (IWGIGCDP) constitute a cross-link (cyclopeptide (Ile-Pro)). A cross-link (2'-cysteinyl-6'-hydroxytryptophan sulfoxide (Trp-Cys)) is located at residues 12–16 (WGIGC). The propeptide occupies 19-36 (CIGDDVTALLTRGEASLC).

It belongs to the MSDIN fungal toxin family. Processed by the macrocyclase-peptidase enzyme POPB to yield a toxic cyclic decapeptide. POPB first removes 10 residues from the N-terminus. Conformational trapping of the remaining peptide forces the enzyme to release this intermediate rather than proceed to macrocyclization. The enzyme rebinds the remaining peptide in a different conformation and catalyzes macrocyclization of the N-terminal 8 residues.

Functionally, toxin belonging to the bicyclic octapeptides amatoxins that acts by binding non-competitively to RNA polymerase II and greatly slowing the elongation of transcripts from target promoters. The protein is Beta-amanitin proprotein of Amanita phalloides (Death cap).